The chain runs to 477 residues: Kinesin-like protein KIN-1 (477 aa).

Residues 3 to 330 form the Kinesin motor domain; that stretch reads NVTVCVRFRP…VRFGTRTKLI (328 aa). 86 to 93 is an ATP binding site; the sequence is GQTGAGKT. Residues 402-451 adopt a coiled-coil conformation; that stretch reads QDAASQEVSLLTQAVEELKETVEELTDENERLRGELELAQEAAAAAAAAR.

The protein belongs to the TRAFAC class myosin-kinesin ATPase superfamily. Kinesin family. KIN-1 subfamily. Widely expressed. Expressed in young roots and leaves, in mature roots, culm, sheath and leaves, and in panicles at various developmental stages. Strongest expression is detected in panicles. In the panicle, expression is detected in anthers, glumme, lemma and palea. In the spikelet, expression is detected in both microsporocyte and the anther walls.

The protein localises to the cytoplasm. Kinesin-like motor protein that exhibits microtubule-stimulated ATPase activity. Plays an essential role in male meiotic chromosomal dynamics, male gametogenesis and anther dehiscence. May play a minor and nonessential role in regulating meiotic spindle formation. The sequence is that of Kinesin-like protein KIN-1 from Oryza sativa subsp. japonica (Rice).